We begin with the raw amino-acid sequence, 1058 residues long: Carbamoyl phosphate synthase large chain (1058 aa).

Residues 1 to 401 are carboxyphosphate synthetic domain; sequence MPKRKDIQKI…SLLKACRSLE (401 aa). Residues arginine 129, arginine 169, glycine 175, glycine 176, arginine 208, isoleucine 210, glutamate 215, glycine 241, isoleucine 242, histidine 243, glutamine 284, and glutamate 298 each contribute to the ATP site. The ATP-grasp 1 domain occupies 133 to 327; sequence KQLMQELDQP…IAKLAAKIAV (195 aa). The Mg(2+) site is built by glutamine 284, glutamate 298, and asparagine 300. Positions 284, 298, and 300 each coordinate Mn(2+). An oligomerization domain region spans residues 402-546; it reads IGVCHNEMTS…YSTYELENES (145 aa). Residues 547–929 are carbamoyl phosphate synthetic domain; that stretch reads VQSNKESILV…ALYKAFEANN (383 aa). In terms of domain architecture, ATP-grasp 2 spans 671 to 861; the sequence is EKALKELGIP…MAQIATKLIL (191 aa). Residues arginine 707, serine 746, isoleucine 748, glutamate 752, glycine 777, valine 778, histidine 779, serine 780, glutamine 820, and glutamate 832 each contribute to the ATP site. Mg(2+) is bound by residues glutamine 820, glutamate 832, and asparagine 834. Mn(2+)-binding residues include glutamine 820, glutamate 832, and asparagine 834. Residues 930–1058 form the MGS-like domain; that stretch reads SHLSEFGQIV…ESRCFNIEAI (129 aa). The interval 930–1058 is allosteric domain; it reads SHLSEFGQIV…ESRCFNIEAI (129 aa).

This sequence belongs to the CarB family. Composed of two chains; the small (or glutamine) chain promotes the hydrolysis of glutamine to ammonia, which is used by the large (or ammonia) chain to synthesize carbamoyl phosphate. Tetramer of heterodimers (alpha,beta)4. Mg(2+) serves as cofactor. The cofactor is Mn(2+).

The catalysed reaction is hydrogencarbonate + L-glutamine + 2 ATP + H2O = carbamoyl phosphate + L-glutamate + 2 ADP + phosphate + 2 H(+). The enzyme catalyses hydrogencarbonate + NH4(+) + 2 ATP = carbamoyl phosphate + 2 ADP + phosphate + 2 H(+). It participates in amino-acid biosynthesis; L-arginine biosynthesis; carbamoyl phosphate from bicarbonate: step 1/1. It functions in the pathway pyrimidine metabolism; UMP biosynthesis via de novo pathway; (S)-dihydroorotate from bicarbonate: step 1/3. Its function is as follows. Large subunit of the glutamine-dependent carbamoyl phosphate synthetase (CPSase). CPSase catalyzes the formation of carbamoyl phosphate from the ammonia moiety of glutamine, carbonate, and phosphate donated by ATP, constituting the first step of 2 biosynthetic pathways, one leading to arginine and/or urea and the other to pyrimidine nucleotides. The large subunit (synthetase) binds the substrates ammonia (free or transferred from glutamine from the small subunit), hydrogencarbonate and ATP and carries out an ATP-coupled ligase reaction, activating hydrogencarbonate by forming carboxy phosphate which reacts with ammonia to form carbamoyl phosphate. The polypeptide is Carbamoyl phosphate synthase large chain (Streptococcus pyogenes serotype M18 (strain MGAS8232)).